A 608-amino-acid chain; its full sequence is Kinetochore protein NUF2 (608 aa).

A required for nuclear localization and function region spans residues isoleucine 121–arginine 125. 2 coiled-coil regions span residues phenylalanine 176–leucine 319 and arginine 358–glutamate 460.

Belongs to the NUF2 family.

Its subcellular location is the chromosome. It is found in the centromere. It localises to the kinetochore. Functionally, required for anchoring centrosomal cores to the nuclear periphery. Plays a role in chromosome segregation but is dispensable for centromere clustering. This Toxoplasma gondii (strain ATCC 50611 / Me49) protein is Kinetochore protein NUF2.